The primary structure comprises 305 residues: tRNA uridine(34) hydroxylase (305 aa).

Residues 126–220 (CDPEVTVIDT…YLEEVPAQES (95 aa)) form the Rhodanese domain. The active-site Cysteine persulfide intermediate is C180.

This sequence belongs to the TrhO family.

It catalyses the reaction uridine(34) in tRNA + AH2 + O2 = 5-hydroxyuridine(34) in tRNA + A + H2O. In terms of biological role, catalyzes oxygen-dependent 5-hydroxyuridine (ho5U) modification at position 34 in tRNAs. The chain is tRNA uridine(34) hydroxylase from Nostoc punctiforme (strain ATCC 29133 / PCC 73102).